The following is a 177-amino-acid chain: Large ribosomal subunit protein uL6 (177 aa).

This sequence belongs to the universal ribosomal protein uL6 family. In terms of assembly, part of the 50S ribosomal subunit.

This protein binds to the 23S rRNA, and is important in its secondary structure. It is located near the subunit interface in the base of the L7/L12 stalk, and near the tRNA binding site of the peptidyltransferase center. The chain is Large ribosomal subunit protein uL6 from Yersinia pseudotuberculosis serotype O:1b (strain IP 31758).